Here is a 467-residue protein sequence, read N- to C-terminus: Cis-zeatin O-glucosyltransferase 1 (467 aa).

Catalysis depends on His21, which acts as the Proton acceptor. An anthocyanidin-binding residues include His21 and Asn91. Asp127 (charge relay) is an active-site residue. Positions 343, 345, 360, 363, 364, 365, 368, 384, and 385 each coordinate UDP-alpha-D-glucose.

It belongs to the UDP-glycosyltransferase family. In terms of tissue distribution, highly expressed in root. Expressed at lower level in kernel and cob. Weakly expressed in leaves. Weakly or not expressed in stems.

The catalysed reaction is cis-zeatin + UDP-alpha-D-glucose = O-beta-D-glucosyl-cis-zeatin + UDP + H(+). In terms of biological role, utilizes UDP-glucose as the sugar donor and catalyzes the formation of O-beta-D-glucosyl-cis-zeatin from cis-zeatin. May regulate active versus storage forms of cytokinins and could have an impact on seed growth. In Zea mays (Maize), this protein is Cis-zeatin O-glucosyltransferase 1 (CISZOG1).